Consider the following 301-residue polypeptide: t-SNARE affecting a late Golgi compartment protein 2 (301 aa).

Residues 1-279 (MAYRDRTGLY…SHQKNTGRLR (279 aa)) are Cytoplasmic-facing. A coiled-coil region spans residues 92–120 (SDKTEQENEIQRLTIQITQDFQRCQKLLQ). Residues 206–268 (DEQAIRHERA…KSAEKELIKA (63 aa)) enclose the t-SNARE coiled-coil homology domain. The helical; Anchor for type IV membrane protein transmembrane segment at 280 to 300 (FICFLILLIVALIVILAIKLL) threads the bilayer. Residue R301 is a topological domain, vesicular.

The protein belongs to the syntaxin family.

It is found in the golgi apparatus. Its subcellular location is the trans-Golgi network membrane. It localises to the endosome membrane. T-SNARE that functions in transport from the endosome to the late Golgi and on the endocytic pathway. The protein is t-SNARE affecting a late Golgi compartment protein 2 (tlg2) of Schizosaccharomyces pombe (strain 972 / ATCC 24843) (Fission yeast).